The chain runs to 690 residues: MGTVSSRRLWWPLPLLLLLLLGPTGTRAQEEDDDDYEELVLALRSEEDGLVDALQHGATATFHRCAKDSWRLPGTYVVVLKEETHRSQPERTARRLQAQAARRGYLIKLLHVFHDLLPGFLVKMSRDLLELALRLPHVDYIEEDSSVFAQSIPWNLERITPARYRADEYQPPNGGSLVEVYLLDTSIQSGHREIEGRVMVTDFGSVPEEDGTRFHRQASKCDSHGTHLAGVVSGRDAGVAKGASLRSLRVLNCQGKGTVSSTLIGLEFIRKSQLVQPVGPLVVLLPLAGGYSRVLNAACQRLARAGVVLVAAAGNFRDDACLYSPASAPEVITVGATNAQDQPVTLGTLGTNFGRCVDLFAPGEDIIGASSDCSTCFVSRSGTSQAAAHVAGIAAMMLSAKPELTLAELRQRLIHFSAKDVINEAWFPEDQRVLTPNLVAALPPSTHGAGWQLFCRTVWSAHSGPTRMATAMARCAPDEELLSCSSFSRSGRRRGERIEAQGGRRVCLAHNAFGGEGVYAIARCCLLPQANCSVHTAPPAGAGMGTRAHCHQQGHILTGCSSHWEVEDLGTHKPPVLRPGGQHDQCMGHRGASTHASCCHAPGLECKVKEHGLPAPQEQVTVTCEEGWTLTGCSALPGTSHILGAYAVDDTCVVRSRDVSTTSSTSEETVATVAICCRSQHLAQASQELQ.

The first 28 residues, 1–28 (MGTVSSRRLWWPLPLLLLLLLGPTGTRA), serve as a signal peptide directing secretion. Residues 29-150 (QEEDDDDYEE…IEEDSSVFAQ (122 aa)) constitute a propeptide that is removed on maturation. Tyr-36 carries the post-translational modification Sulfotyrosine. Ser-45 carries the post-translational modification Phosphoserine. An Inhibitor I9 domain is found at 75 to 147 (TYVVVLKEET…VDYIEEDSSV (73 aa)). The Peptidase S8 domain occupies 153–459 (PWNLERITPA…GWQLFCRTVW (307 aa)). Residues Asp-184 and His-224 each act as charge relay system in the active site. 2 disulfides stabilise this stretch: Cys-221/Cys-253 and Cys-321/Cys-356. Ser-384 functions as the Charge relay system in the catalytic mechanism. The interval 448 to 690 (GAGWQLFCRT…HLAQASQELQ (243 aa)) is C-terminal domain. 3 cysteine pairs are disulfide-bonded: Cys-455–Cys-525, Cys-475–Cys-524, and Cys-484–Cys-507. Asn-531 carries an N-linked (GlcNAc...) asparagine glycan. Disulfide bonds link Cys-532-Cys-599, Cys-550-Cys-598, Cys-560-Cys-586, Cys-606-Cys-677, Cys-624-Cys-676, and Cys-633-Cys-652. Position 686 is a phosphoserine (Ser-686).

Belongs to the peptidase S8 family. Monomer. Can self-associate to form dimers and higher multimers which may have increased LDLR degrading activity. The precursor protein but not the mature protein may form multimers. Interacts with APOB, VLDLR, LRP8/APOER2 and BACE1. The full-length immature form (pro-PCSK9) interacts with SCNN1A, SCNN1B and SCNN1G. The pro-PCSK9 form (via C-terminal domain) interacts with LDLR. Interacts (via the C-terminal domain) with ANXA2 (via repeat Annexin 1); the interaction inhibits the degradation of LDLR. The cofactor is Ca(2+). Cleavage by furin and PCSK5 generates a truncated inactive protein that is unable to induce LDLR degradation. Post-translationally, undergoes autocatalytic cleavage in the endoplasmic reticulum to release the propeptide from the N-terminus and the cleavage of the propeptide is strictly required for its maturation and activation. The cleaved propeptide however remains associated with the catalytic domain through non-covalent interactions, preventing potential substrates from accessing its active site. As a result, it is secreted from cells as a propeptide-containing, enzymatically inactive protein. In terms of processing, phosphorylation protects the propeptide against proteolysis.

It is found in the cytoplasm. Its subcellular location is the secreted. The protein resides in the endosome. The protein localises to the lysosome. It localises to the cell surface. It is found in the endoplasmic reticulum. Its subcellular location is the golgi apparatus. Its activity is regulated as follows. Its proteolytic activity is autoinhibited by the non-covalent binding of the propeptide to the catalytic domain. Inhibited by EGTA. Its function is as follows. Crucial player in the regulation of plasma cholesterol homeostasis. Binds to low-density lipid receptor family members: low density lipoprotein receptor (LDLR), very low density lipoprotein receptor (VLDLR), apolipoprotein E receptor (LRP1/APOER) and apolipoprotein receptor 2 (LRP8/APOER2), and promotes their degradation in intracellular acidic compartments. Acts via a non-proteolytic mechanism to enhance the degradation of the hepatic LDLR through a clathrin LDLRAP1/ARH-mediated pathway. May prevent the recycling of LDLR from endosomes to the cell surface or direct it to lysosomes for degradation. Can induce ubiquitination of LDLR leading to its subsequent degradation. Inhibits intracellular degradation of APOB via the autophagosome/lysosome pathway in a LDLR-independent manner. Involved in the disposal of non-acetylated intermediates of BACE1 in the early secretory pathway. Inhibits epithelial Na(+) channel (ENaC)-mediated Na(+) absorption by reducing ENaC surface expression primarily by increasing its proteasomal degradation. Regulates neuronal apoptosis via modulation of LRP8/APOER2 levels and related anti-apoptotic signaling pathways. In Callithrix jacchus (White-tufted-ear marmoset), this protein is Proprotein convertase subtilisin/kexin type 9 (PCSK9).